The sequence spans 137 residues: Proofreading thioesterase EntH (137 aa).

The active-site Nucleophile or proton acceptor is the Glu-63.

The protein belongs to the thioesterase PaaI family. As to quaternary structure, homotetramer. Dimer of dimers. Interacts specifically with the aryl carrier protein (ArCP) domain of EntB.

The protein resides in the cytoplasm. It functions in the pathway siderophore biosynthesis; enterobactin biosynthesis. Required for optimal enterobactin synthesis. Acts as a proofreading enzyme that prevents EntB misacylation by hydrolyzing the thioester bound existing between EntB and wrongly charged molecules. This Enterobacter lignolyticus (strain SCF1) protein is Proofreading thioesterase EntH.